Reading from the N-terminus, the 259-residue chain is Truncated Ankyrin repeat protein OPG003 (259 aa).

Belongs to the orthopoxvirus OPG003 family.

The chain is Truncated Ankyrin repeat protein OPG003 (OPG003) from Vaccinia virus (strain Copenhagen) (VACV).